A 76-amino-acid polypeptide reads, in one-letter code: ATP synthase subunit 9, mitochondrial (76 aa).

2 helical membrane-spanning segments follow: residues 14 to 34 (ISTI…AALI) and 52 to 72 (ILGF…SFLL).

Belongs to the ATPase C chain family. In terms of assembly, F-type ATPases have 2 components, CF(1) - the catalytic core - and CF(0) - the membrane proton channel. CF(1) has five subunits: alpha(3), beta(3), gamma(1), delta(1), epsilon(1). CF(0) has three main subunits: a, b and c.

Its subcellular location is the mitochondrion membrane. Mitochondrial membrane ATP synthase (F(1)F(0) ATP synthase or Complex V) produces ATP from ADP in the presence of a proton gradient across the membrane which is generated by electron transport complexes of the respiratory chain. F-type ATPases consist of two structural domains, F(1) - containing the extramembraneous catalytic core and F(0) - containing the membrane proton channel, linked together by a central stalk and a peripheral stalk. During catalysis, ATP synthesis in the catalytic domain of F(1) is coupled via a rotary mechanism of the central stalk subunits to proton translocation. Part of the complex F(0) domain. A homomeric c-ring of probably 10 subunits is part of the complex rotary element. This is ATP synthase subunit 9, mitochondrial (ATP9) from Vanderwaltozyma polyspora (strain ATCC 22028 / DSM 70294 / BCRC 21397 / CBS 2163 / NBRC 10782 / NRRL Y-8283 / UCD 57-17) (Kluyveromyces polysporus).